The following is a 201-amino-acid chain: UPF0301 protein Smed_0532 (201 aa).

It belongs to the UPF0301 (AlgH) family.

This chain is UPF0301 protein Smed_0532, found in Sinorhizobium medicae (strain WSM419) (Ensifer medicae).